Reading from the N-terminus, the 904-residue chain is Alanine--tRNA ligase (904 aa).

Zn(2+) is bound by residues His584, His588, Cys687, and His691.

The protein belongs to the class-II aminoacyl-tRNA synthetase family. The cofactor is Zn(2+).

It localises to the cytoplasm. The enzyme catalyses tRNA(Ala) + L-alanine + ATP = L-alanyl-tRNA(Ala) + AMP + diphosphate. Functionally, catalyzes the attachment of alanine to tRNA(Ala) in a two-step reaction: alanine is first activated by ATP to form Ala-AMP and then transferred to the acceptor end of tRNA(Ala). Also edits incorrectly charged Ser-tRNA(Ala) and Gly-tRNA(Ala) via its editing domain. In Mycobacterium bovis (strain ATCC BAA-935 / AF2122/97), this protein is Alanine--tRNA ligase.